Here is an 829-residue protein sequence, read N- to C-terminus: MNQTPQIAQDLLKNPPQELQQLLNDPRTPDSARKAVQELQAPFVGPGTAGNKDGAKESPRLQIVNENQEFTKELSPYLAKWDLLDKGFAYDVVAVFGSQSTGKSTLLNRLFGTTFDVMDESKRQQTTKGIWMCPSQYSNTLVMDVEGTDGRERGEDQDFERKSALFSLASTEVLIVNLWEHQIGLYNGANMGLLKTVFEVNLGLFGGGGDNTKPKPQEKTLILFVIRDHVGATPMSNLTATLTQDMERIWDSLSKPAHLEDAVLSSYFDLSFAALPHKVLMPEKFEEAVLELRQRFTDRSREDYVFQPAYHKRIPADGVSFYMEGIWQQVLTNKDLDLPTQQELLAQFRCDEISTVVFEAFLASAKIVRRPVEAGSVVEGLGALMRDWLETALGKFDRDASRYHSAVYQRKRLDLLASLHASLSPLFLGQLKNLHKIETAKFSKDIVAGVKEPGYDFGVVVEEGKRRARERFLAGAKEVKVEETDWEYEHELALLDEDLKLIADKCRADETKKMVNAIERNVKRQILEPVEVAMSQPTKTMWDTVLKTYSDVIEAAEEAYLSKAKSYNCSDEENSTALASLRARAWLALRRKLEEQTSDSTVLTTLRTKFEDSFRYDEAGVPRVWRPEDDIEAAFRKAKDETLGLLPLFANIAPTEGSLLPELPPPEPSFDVESDPSPFDPSTAFTLLTATKLLSLESRFKRDADAAYVEAKRSMVSSVAQIPVWMYGVLVVLGWNEAMAVLFNPLYFAMLLVLAASGYIILQLGLAGPILQIASTVIREIRQMVVKKLREAFADVPEAQRILAQPVTASSSDEQERKGDLIKGEMLEK.

The Cytoplasmic segment spans residues 1–721 (MNQTPQIAQD…KRSMVSSVAQ (721 aa)). One can recognise a GB1/RHD3-type G domain in the interval 87-310 (GFAYDVVAVF…REDYVFQPAY (224 aa)). Residue 97-104 (GSQSTGKS) coordinates GTP. Positions 487–525 (EYEHELALLDEDLKLIADKCRADETKKMVNAIERNVKRQ) form a coiled coil. Residues 722-742 (IPVWMYGVLVVLGWNEAMAVL) traverse the membrane as a helical segment. Residues 743 to 745 (FNP) lie on the Lumenal side of the membrane. The helical transmembrane segment at 746 to 766 (LYFAMLLVLAASGYIILQLGL) threads the bilayer. At 767-829 (AGPILQIAST…DLIKGEMLEK (63 aa)) the chain is on the cytoplasmic side. The disordered stretch occupies residues 806–829 (PVTASSSDEQERKGDLIKGEMLEK). A compositionally biased stretch (basic and acidic residues) spans 814–829 (EQERKGDLIKGEMLEK).

It belongs to the TRAFAC class dynamin-like GTPase superfamily. GB1/RHD3 GTPase family. RHD3 subfamily.

The protein localises to the endoplasmic reticulum membrane. Functionally, cooperates with the reticulon proteins and tubule-shaping DP1 family proteins to generate and maintain the structure of the tubular endoplasmic reticulum network. Has GTPase activity, which is required for its function in ER organization. The sequence is that of Protein SEY1 from Cryptococcus neoformans var. neoformans serotype D (strain B-3501A) (Filobasidiella neoformans).